We begin with the raw amino-acid sequence, 117 residues long: MAQYRREMLESEMKKLITQGFSQLKDPRLKDKFIDINMVRLSKDKSYLDVYVSSLDEDIDTIINILNNAKGMFRTLIAKNIKMFKVPEVRFHKDEGIEASIRINKLIEKIEKNEEGK.

The protein belongs to the RbfA family. Monomer. Binds 30S ribosomal subunits, but not 50S ribosomal subunits or 70S ribosomes.

The protein localises to the cytoplasm. Functionally, one of several proteins that assist in the late maturation steps of the functional core of the 30S ribosomal subunit. Associates with free 30S ribosomal subunits (but not with 30S subunits that are part of 70S ribosomes or polysomes). Required for efficient processing of 16S rRNA. May interact with the 5'-terminal helix region of 16S rRNA. This Petrotoga mobilis (strain DSM 10674 / SJ95) protein is Ribosome-binding factor A.